A 294-amino-acid chain; its full sequence is Tyrosine-protein phosphatase (294 aa).

Positions 1–24 are cleaved as a signal peptide; that stretch reads MKTHHANLALALMLGLSSSATAVA. Cys182 acts as the Phosphocysteine intermediate in catalysis. Basic and acidic residues-rich tracts occupy residues 221-231 and 238-247; these read QPKDSDERADH and PGDRPQDGGH. A disordered region spans residues 221–252; that stretch reads QPKDSDERADHGAGQAEPGDRPQDGGHGRYRA.

This sequence belongs to the protein-tyrosine phosphatase family. Monomer.

The catalysed reaction is O-phospho-L-tyrosyl-[protein] + H2O = L-tyrosyl-[protein] + phosphate. The sequence is that of Tyrosine-protein phosphatase (iphP) from Nostoc commune.